The sequence spans 122 residues: Riboflavin kinase (122 aa).

Gly-4–Ala-9 provides a ligand contact to CDP. Mg(2+)-binding residues include Thr-33 and Asn-35. 2 residues coordinate FMN: Thr-84 and Glu-92. Residue Val-97 to Arg-100 participates in CDP binding.

Belongs to the archaeal riboflavin kinase family. The cofactor is Mg(2+).

The enzyme catalyses riboflavin + CTP = CDP + FMN + H(+). The protein operates within cofactor biosynthesis; FMN biosynthesis; FMN from riboflavin (CTP route): step 1/1. Catalyzes the CTP-dependent phosphorylation of riboflavin (vitamin B2) to form flavin mononucleotide (FMN). The sequence is that of Riboflavin kinase from Methanothermobacter thermautotrophicus (strain ATCC 29096 / DSM 1053 / JCM 10044 / NBRC 100330 / Delta H) (Methanobacterium thermoautotrophicum).